A 354-amino-acid polypeptide reads, in one-letter code: Probable L-ascorbate-6-phosphate lactonase UlaG (354 aa).

It belongs to the UlaG family. It depends on a divalent metal cation as a cofactor.

It is found in the cytoplasm. It catalyses the reaction L-ascorbate 6-phosphate + H2O = 3-dehydro-L-gulonate 6-phosphate. It functions in the pathway cofactor degradation; L-ascorbate degradation; D-xylulose 5-phosphate from L-ascorbate: step 1/4. Functionally, probably catalyzes the hydrolysis of L-ascorbate-6-P into 3-keto-L-gulonate-6-P. Is essential for L-ascorbate utilization under anaerobic conditions. This is Probable L-ascorbate-6-phosphate lactonase UlaG from Salmonella heidelberg (strain SL476).